Reading from the N-terminus, the 426-residue chain is Tyrosine--tRNA ligase (426 aa).

L-tyrosine is bound at residue Tyr38. Positions 43–52 match the 'HIGH' region motif; it reads PTADSLHIGS. Tyr176 and Gln180 together coordinate L-tyrosine. The 'KMSKS' region signature appears at 236–240; it reads KFGKT. Residue Lys239 participates in ATP binding. The 68-residue stretch at 359–426 folds into the S4 RNA-binding domain; sequence QTIVEVLTQS…KKLFNLYIWK (68 aa).

This sequence belongs to the class-I aminoacyl-tRNA synthetase family. TyrS type 1 subfamily. Homodimer.

The protein resides in the cytoplasm. It carries out the reaction tRNA(Tyr) + L-tyrosine + ATP = L-tyrosyl-tRNA(Tyr) + AMP + diphosphate + H(+). In terms of biological role, catalyzes the attachment of tyrosine to tRNA(Tyr) in a two-step reaction: tyrosine is first activated by ATP to form Tyr-AMP and then transferred to the acceptor end of tRNA(Tyr). This Aliivibrio salmonicida (strain LFI1238) (Vibrio salmonicida (strain LFI1238)) protein is Tyrosine--tRNA ligase.